The chain runs to 272 residues: MDSAFANLDAAGFLQIWQHFDADDNGYIEGKELDDFFRHMLKKLQPKDKITDERVQQIKKSFMSAYDATFDGRLQIEELANMILPQEENFLLIFRREAPLDNSVEFMKIWRKYDADSSGYISAAELKNFLKDLFLQHKKKIPPNKLDEYTDAMMKIFDKNKDGRLDLNDLARILALQENFLLQFKMDASSQVERKRDFEKIFAHYDVSRTGALEGPEVDGFVKDMMELVRPSISGGDLDKFRECLLTHCDMNKDGKIQKSELALCLGLKHKP.

EF-hand domains lie at 8–43 (LDAAGFLQIWQHFDADDNGYIEGKELDDFFRHMLKK), 53–89 (ERVQQIKKSFMSAYDATFDGRLQIEELANMILPQEEN), 101–136 (DNSVEFMKIWRKYDADSSGYISAAELKNFLKDLFLQ), 145–180 (KLDEYTDAMMKIFDKNKDGRLDLNDLARILALQENF), 193–228 (ERKRDFEKIFAHYDVSRTGALEGPEVDGFVKDMMEL), and 237–272 (DLDKFRECLLTHCDMNKDGKIQKSELALCLGLKHKP). Aspartate 21, aspartate 23, asparagine 25, tyrosine 27, and glutamate 32 together coordinate Ca(2+). Aspartate 114, aspartate 116, serine 118, tyrosine 120, glutamate 125, aspartate 158, asparagine 160, aspartate 162, arginine 164, aspartate 169, aspartate 206, serine 208, threonine 210, glutamate 217, aspartate 250, asparagine 252, aspartate 254, lysine 256, and glutamate 261 together coordinate Ca(2+).

Its subcellular location is the cytoplasm. The protein is Secretagogin (scgn) of Danio rerio (Zebrafish).